A 347-amino-acid polypeptide reads, in one-letter code: Mitochondrial carrier protein rim2 (347 aa).

Solcar repeat units lie at residues 32–136, 146–234, and 256–345; these read PPPL…GKRI, ENSQ…FKHA, and LDWG…IMHF. A run of 6 helical transmembrane segments spans residues 38–58, 105–125, 152–172, 214–233, 262–282, and 317–338; these read FIAG…LDVV, TRAL…ARSI, LMAA…IWLV, SLLG…KFKH, LGGA…HEVV, and LYGG…LFGS.

The protein resides in the mitochondrion inner membrane. It carries out the reaction 5-methyl-UTP(out) + UTP(in) = 5-methyl-UTP(in) + UTP(out). Functionally, mitochondrial transporter that imports/exports pyrimidine nucleotides into and from mitochondria. Selectively transports uridine, thymidine, and cytosine (deoxy)nucleoside di- and triphosphates by an antiport mechanism. Also transports, with lower efficiency, uridine, thymidine, and cytosine (deoxy)nucleoside monophosphates as well as guanosine (deoxy)nucleoside di- and triphosphate. May import (deoxy)nucleoside triphosphates in exchange for intramitochondrial (deoxy)nucleoside monophosphates, thus providing precursors necessary for de novo synthesis of mitochondrial DNA and RNA while exporting products of their catabolism. Mediates the transport of iron and other divalent metal ions like copper and zinc across the mitochondrial inner membrane in a pyrimidine nucleotide-dependent fashion. Catalyzes the co-import of pyrimidine nucleotides and divalent metal ions including ferrous iron. Participates in mitochondrial genome maintenance, regulation of mitochondrial membrane potential and mitochondrial respiration. This chain is Mitochondrial carrier protein rim2 (rim2), found in Schizosaccharomyces pombe (strain 972 / ATCC 24843) (Fission yeast).